Here is a 325-residue protein sequence, read N- to C-terminus: D-alanine--D-alanine ligase (325 aa).

The 201-residue stretch at 109-309 (KRVCKERMLP…FCTLLDQLIE (201 aa)) folds into the ATP-grasp domain. 136 to 191 (CRRLPFPMFVKPANLGSSVGISKAHDEQELEAAFSLAKQYDRKIIVERGIEGRELE) is a binding site for ATP. Mg(2+) is bound by residues D262, E276, and N278.

It belongs to the D-alanine--D-alanine ligase family. Mg(2+) serves as cofactor. It depends on Mn(2+) as a cofactor.

It localises to the cytoplasm. It catalyses the reaction 2 D-alanine + ATP = D-alanyl-D-alanine + ADP + phosphate + H(+). The protein operates within cell wall biogenesis; peptidoglycan biosynthesis. Cell wall formation. This chain is D-alanine--D-alanine ligase, found in Solibacter usitatus (strain Ellin6076).